Here is a 241-residue protein sequence, read N- to C-terminus: DNA repair protein RecO (241 aa).

Belongs to the RecO family.

In terms of biological role, involved in DNA repair and RecF pathway recombination. This chain is DNA repair protein RecO, found in Rickettsia bellii (strain OSU 85-389).